Reading from the N-terminus, the 1351-residue chain is ABC transporter C family member 6 (1351 aa).

Positions 112–397 constitute an ABC transmembrane type-1 1 domain; sequence NKYALVSNLF…LPYDIFKAIG (286 aa). 3 consecutive transmembrane segments (helical) span residues 120–140, 149–169, and 248–268; these read LFII…INYI, SILK…GQSI, and LLCY…VIAL. Positions 474-700 constitute an ABC transporter 1 domain; sequence NQDESINKKE…GIDFKSILKT (227 aa). 510–517 contacts ATP; that stretch reads GVVGSGKT. Positions 701–734 form a coiled coil; that stretch reads KEIKKNVENETDSEELIKNEIEIENEIIDVNNAI. The next 6 membrane-spanning stretches (helical) occupy residues 771 to 791, 815 to 835, 904 to 924, 977 to 999, 1002 to 1022, and 1025 to 1045; these read GSSG…QAIF, IGYY…RILL, LISI…LSIA, MFDN…RWVS, LEVM…LFIS, and GLAA…SWGI. The 284-residue stretch at 777-1060 folds into the ABC transmembrane type-1 2 domain; sequence LFITISLFFV…LEVKMNSFQR (284 aa). The ABC transporter 2 domain occupies 1101-1336; it reads IEFKNVEIKY…PNSKFNKLIK (236 aa). 1135–1142 is a binding site for ATP; it reads GRTGAGKT.

Belongs to the ABC transporter superfamily. ABCC family. Conjugate transporter (TC 3.A.1.208) subfamily.

It localises to the membrane. In Dictyostelium discoideum (Social amoeba), this protein is ABC transporter C family member 6 (abcC6).